A 185-amino-acid polypeptide reads, in one-letter code: 3-hexulose-6-phosphate isomerase (185 aa).

Positions 29-172 constitute an SIS domain; that stretch reads LADHILSSHQ…ILKLMEKKGL (144 aa). Substrate-binding positions include serine 47 and 86 to 91; that span reads SGSGET. Glutamate 152 acts as the Proton acceptor in catalysis.

It belongs to the SIS family. PHI subfamily. Homotetramer.

It carries out the reaction D-arabino-hex-3-ulose 6-phosphate = beta-D-fructose 6-phosphate. The protein operates within one-carbon metabolism; formaldehyde assimilation via RuMP pathway; D-fructose 6-phosphate from D-ribulose 5-phosphate and formaldehyde: step 2/2. Functionally, catalyzes the isomerization between 3-hexulose 6-phosphate and fructose 6-phosphate. Together with HxlA, may act as a formaldehyde detoxification system. This Bacillus subtilis (strain 168) protein is 3-hexulose-6-phosphate isomerase (hxlB).